Here is a 155-residue protein sequence, read N- to C-terminus: MQIKQIEGALSAKDARFALVISRFNDFIGQKLMEGAIDCIRRHGGSEDNITIYRCPGAFELPMVAKKAALTGKYDALITLGAIIRGSTPHFDVVAAEATKGIAQASLETGVPIAFGVLTTENIEQAIERAGTKAGNKGFDAALTAIEMVNLYRNM.

5-amino-6-(D-ribitylamino)uracil contacts are provided by residues phenylalanine 24, 58–60, and 82–84; these read AFE and AII. Position 87 to 88 (87 to 88) interacts with (2S)-2-hydroxy-3-oxobutyl phosphate; it reads ST. Histidine 90 serves as the catalytic Proton donor. 5-amino-6-(D-ribitylamino)uracil is bound at residue phenylalanine 115. Residue arginine 129 participates in (2S)-2-hydroxy-3-oxobutyl phosphate binding.

The protein belongs to the DMRL synthase family.

The catalysed reaction is (2S)-2-hydroxy-3-oxobutyl phosphate + 5-amino-6-(D-ribitylamino)uracil = 6,7-dimethyl-8-(1-D-ribityl)lumazine + phosphate + 2 H2O + H(+). The protein operates within cofactor biosynthesis; riboflavin biosynthesis; riboflavin from 2-hydroxy-3-oxobutyl phosphate and 5-amino-6-(D-ribitylamino)uracil: step 1/2. Catalyzes the formation of 6,7-dimethyl-8-ribityllumazine by condensation of 5-amino-6-(D-ribitylamino)uracil with 3,4-dihydroxy-2-butanone 4-phosphate. This is the penultimate step in the biosynthesis of riboflavin. The chain is 6,7-dimethyl-8-ribityllumazine synthase from Chlorobium luteolum (strain DSM 273 / BCRC 81028 / 2530) (Pelodictyon luteolum).